Reading from the N-terminus, the 448-residue chain is Asparagine--tRNA ligase (448 aa).

This sequence belongs to the class-II aminoacyl-tRNA synthetase family. As to quaternary structure, homodimer.

It is found in the cytoplasm. The enzyme catalyses tRNA(Asn) + L-asparagine + ATP = L-asparaginyl-tRNA(Asn) + AMP + diphosphate + H(+). This Streptococcus agalactiae serotype Ia (strain ATCC 27591 / A909 / CDC SS700) protein is Asparagine--tRNA ligase.